The sequence spans 570 residues: Glycine--tRNA ligase (570 aa).

Substrate is bound by residues R99 and E165. Residues 197 to 199 (RNE), 207 to 212 (IRLREF), 324 to 325 (EC), and 443 to 446 (GIDR) contribute to the ATP site. 212–216 (FTQAE) is a binding site for substrate. 439 to 443 (EPSFG) contributes to the substrate binding site.

This sequence belongs to the class-II aminoacyl-tRNA synthetase family.

It localises to the cytoplasm. It carries out the reaction tRNA(Gly) + glycine + ATP = glycyl-tRNA(Gly) + AMP + diphosphate. Its function is as follows. Catalyzes the attachment of glycine to tRNA(Gly). This Pyrococcus horikoshii (strain ATCC 700860 / DSM 12428 / JCM 9974 / NBRC 100139 / OT-3) protein is Glycine--tRNA ligase.